Here is a 244-residue protein sequence, read N- to C-terminus: Protein TIFY 10b (244 aa).

The Tify domain occupies 97-132 (QEPEKRQLTIFYGGKVLVFNDFPADKAKGLMQLASK). Residues 185–210 (PIARKASLHRFLEKRKDRLNAKTPYQ) carry the Jas motif. The Nuclear localization signal motif lies at 187-194 (ARKASLHR). Residues 193-244 (HRFLEKRKDRLNAKTPYQASPSDATPVKKEPESQPWLGLGPNAVVKPIERGQ) form a disordered region. Residues 194–204 (RFLEKRKDRLN) show a composition bias toward basic and acidic residues.

The protein belongs to the TIFY/JAZ family. In terms of processing, ubiquitinated. Targeted for degradation by the SCF(COI1) E3 ubiquitin ligase-proteasome pathway during jasmonate signaling.

It localises to the nucleus. Repressor of jasmonate responses. This chain is Protein TIFY 10b, found in Oryza sativa subsp. indica (Rice).